Here is a 356-residue protein sequence, read N- to C-terminus: MLLDRYLLSRFLGIFLNVSFVSVLLVSLYALLDFLVGFKEKRTDVALSYFLNILPLGFYYISFITLSISLILFLRKVFEKKMELTVQSFGISPLRFSLPVLLFSVFLSSTFLLGNEYAFPKLLGNLWFIEKNYKKKQEVKGFIKNFWFIKKENEVKTYYHVGNLNLSDGSLFNFYTMKVERKNLNPLEVLKVFSGVWKDKEIFIRSGEIYDFEKGKREKVFNKTFKLGLSIKEVELFSEKIDFLSLSEIFFLMQKSKKVGLNVDVYTGELFYRVMFSLSPVFISIFSLYLFFKHKVLSQVIPRFLVFIVILWLVILSPKILPQKANQPVLYSLIPIFLLILYSLKGVYDLRKGFRV.

A run of 6 helical transmembrane segments spans residues 7 to 29, 49 to 71, 91 to 113, 270 to 292, 299 to 316, and 329 to 348; these read LLSR…VSLY, YFLN…ISLI, ISPL…TFLL, LFYR…YLFF, QVIP…LVIL, and VLYS…KGVY.

It is found in the cell membrane. This is an uncharacterized protein from Aquifex aeolicus (strain VF5).